The chain runs to 166 residues: MLGRRIFSPAPNRGFILCNLIQSNNSTRRGFSDNRKFNERNSEASSNVGFQRRVRSNIPSYLSASVEEGDIYSPNDLLFETVKAKNQAKFYEPVREDCFKTVNENPMNYWKNPVILSRFVTELGRIKPRGDTGLTAKNQRLLSRAIRRARAAGIMPTKYKSVYSEN.

Residues 1–31 (MLGRRIFSPAPNRGFILCNLIQSNNSTRRGF) constitute a mitochondrion transit peptide. A disordered region spans residues 29–48 (RGFSDNRKFNERNSEASSNV). Residues 30-42 (GFSDNRKFNERNS) show a composition bias toward basic and acidic residues.

Belongs to the bacterial ribosomal protein bS18 family. In terms of assembly, component of the mitochondrial small ribosomal subunit (mt-SSU). Mature yeast 74S mitochondrial ribosomes consist of a small (37S) and a large (54S) subunit. The 37S small subunit contains a 15S ribosomal RNA (15S mt-rRNA) and at least 32 different proteins. The 54S large subunit contains a 21S rRNA (21S mt-rRNA) and at least 45 different proteins.

It is found in the mitochondrion. Component of the mitochondrial ribosome (mitoribosome), a dedicated translation machinery responsible for the synthesis of mitochondrial genome-encoded proteins, including at least some of the essential transmembrane subunits of the mitochondrial respiratory chain. The mitoribosomes are attached to the mitochondrial inner membrane and translation products are cotranslationally integrated into the membrane. The chain is Small ribosomal subunit protein bS18m (rsm18) from Schizosaccharomyces pombe (strain 972 / ATCC 24843) (Fission yeast).